Reading from the N-terminus, the 130-residue chain is Small ribosomal subunit protein uS9 (130 aa).

This sequence belongs to the universal ribosomal protein uS9 family.

The chain is Small ribosomal subunit protein uS9 from Streptococcus pyogenes serotype M1.